Consider the following 241-residue polypeptide: Large ribosomal subunit protein uL30 (241 aa).

The segment at 1–25 (MASTLKPETLVKKSKAQQKTAEERA) is disordered.

Belongs to the universal ribosomal protein uL30 family.

The sequence is that of Large ribosomal subunit protein uL30 (RPL7) from Debaryomyces hansenii (strain ATCC 36239 / CBS 767 / BCRC 21394 / JCM 1990 / NBRC 0083 / IGC 2968) (Yeast).